The following is a 169-amino-acid chain: Large ribosomal subunit protein uL10 (169 aa).

Belongs to the universal ribosomal protein uL10 family. Part of the ribosomal stalk of the 50S ribosomal subunit. The N-terminus interacts with L11 and the large rRNA to form the base of the stalk. The C-terminus forms an elongated spine to which L12 dimers bind in a sequential fashion forming a multimeric L10(L12)X complex.

Forms part of the ribosomal stalk, playing a central role in the interaction of the ribosome with GTP-bound translation factors. This Orientia tsutsugamushi (strain Boryong) (Rickettsia tsutsugamushi) protein is Large ribosomal subunit protein uL10.